Consider the following 569-residue polypeptide: Proline--tRNA ligase (569 aa).

Belongs to the class-II aminoacyl-tRNA synthetase family. ProS type 1 subfamily. As to quaternary structure, homodimer.

It localises to the cytoplasm. It carries out the reaction tRNA(Pro) + L-proline + ATP = L-prolyl-tRNA(Pro) + AMP + diphosphate. In terms of biological role, catalyzes the attachment of proline to tRNA(Pro) in a two-step reaction: proline is first activated by ATP to form Pro-AMP and then transferred to the acceptor end of tRNA(Pro). As ProRS can inadvertently accommodate and process non-cognate amino acids such as alanine and cysteine, to avoid such errors it has two additional distinct editing activities against alanine. One activity is designated as 'pretransfer' editing and involves the tRNA(Pro)-independent hydrolysis of activated Ala-AMP. The other activity is designated 'posttransfer' editing and involves deacylation of mischarged Ala-tRNA(Pro). The misacylated Cys-tRNA(Pro) is not edited by ProRS. The polypeptide is Proline--tRNA ligase (Shewanella loihica (strain ATCC BAA-1088 / PV-4)).